A 180-amino-acid polypeptide reads, in one-letter code: MNSLLSRANSLFAFTLSVMAALTLGCILTTAFKDRSAPVRLHVSRILLKKVEDFTGPRKKSDLGFITFHISADLEKTFDWNVKQLFLYLSAEYSTKSNAVNQVVLWDKILLRGENPKLNLKDVKSKYFFFDDGHGLKGNRNVTLTLSWQVIPIAGILPLVTGSGRVSVPFPDSYEIATTF.

The Cytoplasmic segment spans residues Met1–Leu11. The helical; Signal-anchor for type II membrane protein transmembrane segment at Phe12–Phe32 threads the bilayer. The Lumenal portion of the chain corresponds to Lys33–Phe180. Asn141 carries N-linked (GlcNAc...) asparagine glycosylation.

This sequence belongs to the SPCS3 family. As to expression, strongly expressed in epididymal white and brown adipose tissue with low levels in heart.

The protein localises to the endoplasmic reticulum membrane. Functionally, plays a role in adipogenesis. This Mus musculus (Mouse) protein is Adipocyte-related X-chromosome expressed sequence 1.